Consider the following 289-residue polypeptide: Acetyl-coenzyme A carboxylase carboxyl transferase subunit beta (289 aa).

A CoA carboxyltransferase N-terminal domain is found at 24 to 289 (LWIKCPESGE…NSPRRAPIPA (266 aa)).

This sequence belongs to the AccD/PCCB family. In terms of assembly, acetyl-CoA carboxylase is a heterohexamer composed of biotin carboxyl carrier protein (AccB), biotin carboxylase (AccC) and two subunits each of ACCase subunit alpha (AccA) and ACCase subunit beta (AccD).

The protein localises to the cytoplasm. It catalyses the reaction N(6)-carboxybiotinyl-L-lysyl-[protein] + acetyl-CoA = N(6)-biotinyl-L-lysyl-[protein] + malonyl-CoA. The protein operates within lipid metabolism; malonyl-CoA biosynthesis; malonyl-CoA from acetyl-CoA: step 1/1. Functionally, component of the acetyl coenzyme A carboxylase (ACC) complex. Biotin carboxylase (BC) catalyzes the carboxylation of biotin on its carrier protein (BCCP) and then the CO(2) group is transferred by the transcarboxylase to acetyl-CoA to form malonyl-CoA. This Beijerinckia indica subsp. indica (strain ATCC 9039 / DSM 1715 / NCIMB 8712) protein is Acetyl-coenzyme A carboxylase carboxyl transferase subunit beta.